A 139-amino-acid polypeptide reads, in one-letter code: MGETVRFGISMDDQLLESFDRLIEQKGYANRSEAIRDLIRAAQVELDWEEGEKEGVGTVTLVYNHHVRDLSDKLTEQQHAHHDQIISALHVHLDAHNCLEVLVVRGKARDVRRIADELIGVKGVKHGKLVMTTTGEGLH.

The Ni(2+) site is built by histidine 79, histidine 90, histidine 92, and cysteine 98.

The protein belongs to the transcriptional regulatory CopG/NikR family. The cofactor is Ni(2+).

Functionally, transcriptional regulator. The sequence is that of Putative nickel-responsive regulator from Geobacter sp. (strain M21).